Consider the following 349-residue polypeptide: Core protein VP7 (349 aa).

Asn45 carries N-linked (GlcNAc...) asparagine; by host glycosylation.

Belongs to the orbivirus VP7 family. In terms of assembly, homotrimer.

It localises to the virion. Functionally, major structural core protein; binds to structural protein VP3. Constitutes the surface of the AHSV core. In Camelus dromedarius (Dromedary), this protein is Core protein VP7 (Segment-7).